A 120-amino-acid polypeptide reads, in one-letter code: Large ribosomal subunit protein bL21 (120 aa).

It belongs to the bacterial ribosomal protein bL21 family. Part of the 50S ribosomal subunit. Contacts protein L20.

This protein binds to 23S rRNA in the presence of protein L20. The sequence is that of Large ribosomal subunit protein bL21 from Roseiflexus castenholzii (strain DSM 13941 / HLO8).